A 447-amino-acid chain; its full sequence is MRLKSIITVIALILIMFMSAIESSIISLALPTIKQDLNAGNLISLIFTAYFIALVIANPIVGELLSRFKIIYVAIAGLLLFSIGSFMCGLSTNFTMLIISRVIQGFGSGVLMSLSQIVPKLAFEIPLRYKIMGIVGSVWGISSIIGPLLGGGILEFATWHWLFYINIPIAIIAIILVIWTFHFPEEETVAKSKFDTKGLTLFYVFIGLIMFALLNQQLLLLNFLSFILAIVVAMCLFKVEKHVSSPFLPVVEFNRSITLVFITDLLTAICLMGFNLYIPVYLQEQLGLSPLQSGLVIFPLSVAWITLNFNLHRIEAKLSRKVIYLLSFTLLLVSSIIISFGIKLPVLIAFVLILAGLSFGYIYTKDSVIVQEETSPLQMKKMMSFYGLTKNLGASIGSTIMGYLYAIQSGIFGPNLHNVLSAVAVISIGLIVLWVVFFKEQSSQSKE.

Helical transmembrane passes span I6–I26, L42–G62, I70–L90, F94–L114, I134–L154, W161–F181, F194–L214, Q217–F237, V260–V280, L286–T306, I323–I342, V346–Y363, L392–F412, and N418–F438.

Belongs to the major facilitator superfamily.

The protein resides in the cell membrane. Energy-dependent drug efflux pump that increases resistance to antimicrobial agents such as norfloxacin, acriflavine and ethidium bromide. The sequence is that of Multidrug efflux pump SdrM from Staphylococcus aureus (strain N315).